We begin with the raw amino-acid sequence, 148 residues long: Wound-induced proteinase inhibitor 2 (148 aa).

The N-terminal stretch at 1 to 25 (MAVHKEVNFVAYLLIVLGMFLYVDA) is a signal peptide. One copy of the 1; trypsin-inhibitory repeat lies at 26 to 81 (KACTRECGNLGFGICPRSEGSPLNPICINCCSGYKGCNYYNSFGKFICEGESDPKR). 8 disulfide bridges follow: cysteine 28-cysteine 116, cysteine 32-cysteine 112, cysteine 40-cysteine 122, cysteine 52-cysteine 89, cysteine 55-cysteine 73, cysteine 56-cysteine 85, cysteine 62-cysteine 98, and cysteine 115-cysteine 133. The stretch at 83–141 (NACTFNCDPNIAYSRCPRSQGKSLIYPTGCTTCCTGYKGCYYFGKDGKFVCEGESDEPK) is one 2; chymotrypsin-inhibitory repeat.

The protein belongs to the protease inhibitor I20 (potato type II proteinase inhibitor) family.

The protein localises to the secreted. Its function is as follows. Potent inhibitor of both trypsin and chymotrypsin. The polypeptide is Wound-induced proteinase inhibitor 2 (Solanum lycopersicum (Tomato)).